A 388-amino-acid chain; its full sequence is Succinate--CoA ligase [ADP-forming] subunit beta (388 aa).

One can recognise an ATP-grasp domain in the interval 9–244; it reads KQLFARYGLP…PSQEDSREAH (236 aa). ATP is bound by residues Lys-46, 53–55, Glu-99, Thr-102, and Glu-107; that span reads GRG. Residues Asn-199 and Asp-213 each coordinate Mg(2+). Residues Asn-264 and 321–323 each bind substrate; that span reads GIV.

The protein belongs to the succinate/malate CoA ligase beta subunit family. In terms of assembly, heterotetramer of two alpha and two beta subunits. Mg(2+) serves as cofactor.

The enzyme catalyses succinate + ATP + CoA = succinyl-CoA + ADP + phosphate. It carries out the reaction GTP + succinate + CoA = succinyl-CoA + GDP + phosphate. It participates in carbohydrate metabolism; tricarboxylic acid cycle; succinate from succinyl-CoA (ligase route): step 1/1. Functionally, succinyl-CoA synthetase functions in the citric acid cycle (TCA), coupling the hydrolysis of succinyl-CoA to the synthesis of either ATP or GTP and thus represents the only step of substrate-level phosphorylation in the TCA. The beta subunit provides nucleotide specificity of the enzyme and binds the substrate succinate, while the binding sites for coenzyme A and phosphate are found in the alpha subunit. This chain is Succinate--CoA ligase [ADP-forming] subunit beta, found in Pectobacterium atrosepticum (strain SCRI 1043 / ATCC BAA-672) (Erwinia carotovora subsp. atroseptica).